We begin with the raw amino-acid sequence, 1233 residues long: MGFLKLIEIENFKSYKGRQIIGPFQRFTAIIGPNGSGKSNLMDAISFVLGEKTSNLRVKTLRDLIHGAPVGKPAANRAFVSMVYSEEGAEDRTFARVIVGGSSEYKINNKVVQLHEYSEELEKLGILIKARNFLVFQGAVESIAMKNPKERTALFEEISRSGELAQEYDKRKKEMVKAEEDTQFNYHRKKNIAAERKEAKQEKEEADRYQRLKDEVVRAQVQLQLFKLYHNEVEIEKLNKELASKNKEIEKDKKRMDKVEDELKEKKKELGKMMREQQQIEKEIKEKDSELNQKRPQYIKAKENTSHKIKKLEAAKKSLQNAQKHYKKRKGDMDELEKEMLSVEKARQEFEERMEEESQSQGRDLTLEENQVKKYHRLKEEASKRAATLAQELEKFNRDQKADQDRLDLEERKKVETEAKIKQKLREIEENQKRIEKLEEYITTSKQSLEEQKKLEGELTEEVEMAKRRIDEINKELNQVMEQLGDARIDRQESSRQQRKAEIMESIKRLYPGSVYGRLIDLCQPTQKKYQIAVTKVLGKNMDAIIVDSEKTGRDCIQYIKEQRGEPETFLPLDYLEVKPTDEKLRELKGAKLVIDVIRYEPPHIKKALQYACGNALVCDNVEDARRIAFGGHQRHKTVALDGTLFQKSGVISGGASDLKAKARRWDEKAVDKLKEKKERLTEELKEQMKAKRKEAELRQVQSQAHGLQMRLKYSQSDLEQTKTRHLALNLQEKSKLESELANFGPRINDIKRIIQSREREMKDLKEKMNQVEDEVFEEFCREIGVRNIREFEEEKVKRQNEIAKKRLEFENQKTRLGIQLDFEKNQLKEDQDKVHMWEQTVKKDENEIEKLKKEEQRHMKIIDETMAQLQDLKNQHLAKKSEVNDKNHEMEEIRKKLGGANKEMTHLQKEVTAIETKLEQKRSDRHNLLQACKMQDIKLPLSKGTMDDISQEEGSSQGEESVSGSQRTSSIYAREALIEIDYGDLCEDLKDAQAEEEIKQEMNTLQQKLNEQQSVLQRIAAPNMKAMEKLESVRDKFQETSDEFEAARKRAKKAKQAFEQIKKERFDRFNACFESVATNIDEIYKALSRNSSAQAFLGPENPEEPYLDGINYNCVAPGKRFRPMDNLSGGEKTVAALALLFAIHSYKPAPFFVLDEIDAALDNTNIGKVANYIKEQSTCNFQAIVISLKEEFYTKAESLIGVYPEQGDCVISKVLTFDLTKYPDANPNPNEQ.

Position 32–39 (32–39) interacts with ATP; that stretch reads GPNGSGKS. Coiled coils occupy residues 104–124 and 163–503; these read EYKI…LEKL and ELAQ…KAEI. Positions 284-293 are enriched in basic and acidic residues; it reads IKEKDSELNQ. Disordered stretches follow at residues 284-308 and 348-369; these read IKEK…TSHK and QEFE…TLEE. Residues S358 and S360 each carry the phosphoserine modification. Residues 515 to 629 form the SMC hinge domain; the sequence is VYGRLIDLCQ…DNVEDARRIA (115 aa). K648 and K713 each carry N6-acetyllysine. The stretch at 667–935 forms a coiled coil; the sequence is DEKAVDKLKE…RHNLLQACKM (269 aa). Residues 947–969 are disordered; that stretch reads MDDISQEEGSSQGEESVSGSQRT. Low complexity predominate over residues 953–967; it reads EEGSSQGEESVSGSQ. 4 positions are modified to phosphoserine: S957, S962, S966, and S970. Positions 988 to 1068 form a coiled coil; the sequence is EDLKDAQAEE…FEQIKKERFD (81 aa). K1037 is subject to N6-acetyllysine.

This sequence belongs to the SMC family. SMC1 subfamily. In terms of assembly, forms a heterodimer with SMC3 in cohesin complexes. Cohesin complexes are composed of the SMC1 (SMC1A or SMC1B) and SMC3 heterodimer attached via their SMC hinge domain, RAD21 which link them, and one STAG protein (STAG1, STAG2 or STAG3), which interacts with RAD21. In germ cell cohesin complexes, SMC1A is mutually exclusive with SMC1B. Interacts with STAG3. Found in a complex with CDCA5, SMC3 and RAD21, PDS5A/SCC-112 and PDS5B/APRIN. Found in a complex containing POLE and SMC3. Interacts with BRCA1, SYCP2, NDC80, RPGR and BRAT1. The cohesin complex interacts with the cohesin loading complex subunits NIPBL/Scc2 (via HEAT repeats) and MAU2/Scc4. NIPBL directly contacts all members of the complex, RAD21, SMC1A/B, SMC3 and STAG1. Phosphorylated upon ionizing radiation or DNA methylation. Phosphorylation of Ser-957 and Ser-966 activates it and is required for S-phase checkpoint activation. Post-translationally, ubiquitinated by the DCX(DCAF15) complex, leading to its degradation. In terms of tissue distribution, ubiquitous (at protein level).

The protein localises to the nucleus. It is found in the chromosome. The protein resides in the centromere. Involved in chromosome cohesion during cell cycle and in DNA repair. Involved in DNA repair via its interaction with BRCA1 and its related phosphorylation by ATM, and works as a downstream effector in the ATM/NBS1 branch of S-phase checkpoint. Central component of cohesin complex. The cohesin complex is required for the cohesion of sister chromatids after DNA replication. The cohesin complex apparently forms a large proteinaceous ring within which sister chromatids can be trapped. At anaphase, the complex is cleaved and dissociates from chromatin, allowing sister chromatids to segregate. The cohesin complex may also play a role in spindle pole assembly during mitosis. Involved in DNA repair via its interaction with BRCA1 and its related phosphorylation by ATM, or via its phosphorylation by ATR. Works as a downstream effector both in the ATM/NBS1 branch and in the ATR/MSH2 branch of S-phase checkpoint. This Mus musculus (Mouse) protein is Structural maintenance of chromosomes protein 1A (Smc1a).